The chain runs to 215 residues: Cytochrome b6 (215 aa).

Residues 32–52 form a helical membrane-spanning segment; that stretch reads IFYCFGGLVLTCFLIQVATGF. Position 35 (cysteine 35) interacts with heme c. 2 residues coordinate heme b: histidine 86 and histidine 100. 3 consecutive transmembrane segments (helical) span residues 90-110, 116-136, and 186-206; these read ASMM…TGGF, LTWV…VTGY, and AHTF…FLMI. Heme b is bound by residues histidine 187 and histidine 202.

The protein belongs to the cytochrome b family. PetB subfamily. In terms of assembly, the 4 large subunits of the cytochrome b6-f complex are cytochrome b6, subunit IV (17 kDa polypeptide, PetD), cytochrome f and the Rieske protein, while the 4 small subunits are PetG, PetL, PetM and PetN. The complex functions as a dimer. Requires heme b as cofactor. Heme c serves as cofactor.

The protein resides in the plastid. It localises to the chloroplast thylakoid membrane. In terms of biological role, component of the cytochrome b6-f complex, which mediates electron transfer between photosystem II (PSII) and photosystem I (PSI), cyclic electron flow around PSI, and state transitions. The sequence is that of Cytochrome b6 from Phaeodactylum tricornutum (strain CCAP 1055/1).